The sequence spans 284 residues: RNase adapter protein RapZ (284 aa).

An ATP-binding site is contributed by 8–15; the sequence is GRSGSGKS. A GTP-binding site is contributed by 56-59; sequence DVRN. Residues 266–284 form an RNA-binding region; sequence RSRGKNVQLRHRTLEKRKE.

The protein belongs to the RapZ-like family. RapZ subfamily. In terms of assembly, homotrimer.

In terms of biological role, modulates the synthesis of GlmS, by affecting the processing and stability of the regulatory small RNA GlmZ. When glucosamine-6-phosphate (GlcN6P) concentrations are high in the cell, RapZ binds GlmZ and targets it to cleavage by RNase E. Consequently, GlmZ is inactivated and unable to activate GlmS synthesis. Under low GlcN6P concentrations, RapZ is sequestered and inactivated by an other regulatory small RNA, GlmY, preventing GlmZ degradation and leading to synthesis of GlmS. The sequence is that of RNase adapter protein RapZ from Hamiltonella defensa subsp. Acyrthosiphon pisum (strain 5AT).